The primary structure comprises 119 residues: MARFVVVPLFVLLSLFGLEAIQHPPKIQVYSRYPADNGKPNFLNCYVSGFHPSDIEVDLLKNGKKIEKVEHSDLSFSKDWSFYLLYYTEFTPNEKDEYACRVSHVTFSTPKTVKWDRNM.

The N-terminal stretch at 1–20 is a signal peptide; sequence MARFVVVPLFVLLSLFGLEA. Positions 25–114 constitute an Ig-like C1-type domain; that stretch reads PKIQVYSRYP…VTFSTPKTVK (90 aa). Cysteines 45 and 100 form a disulfide.

Belongs to the beta-2-microglobulin family. Heterodimer of an alpha chain and a beta chain. Beta-2-microglobulin is the beta-chain of major histocompatibility complex class I molecules.

The protein localises to the secreted. Its function is as follows. Component of the class I major histocompatibility complex (MHC). Involved in the presentation of peptide antigens to the immune system. This is Beta-2-microglobulin (B2M) from Saguinus niger (Black tamarin).